The sequence spans 348 residues: Isopentenyl-diphosphate delta-isomerase (348 aa).

9-10 (RK) contributes to the substrate binding site. FMN is bound by residues 68-70 (AMT), serine 98, and asparagine 127. Glutamine 157 serves as a coordination point for substrate. Glutamate 158 serves as a coordination point for Mg(2+). Residues lysine 188, serine 213, threonine 218, and 286–287 (AG) contribute to the FMN site.

It belongs to the IPP isomerase type 2 family. As to quaternary structure, homooctamer. Dimer of tetramers. It depends on FMN as a cofactor. The cofactor is NADPH. Mg(2+) serves as cofactor.

It is found in the cytoplasm. It carries out the reaction isopentenyl diphosphate = dimethylallyl diphosphate. Involved in the biosynthesis of isoprenoids. Catalyzes the 1,3-allylic rearrangement of the homoallylic substrate isopentenyl (IPP) to its allylic isomer, dimethylallyl diphosphate (DMAPP). This is Isopentenyl-diphosphate delta-isomerase from Limosilactobacillus reuteri subsp. reuteri (strain JCM 1112) (Lactobacillus reuteri).